The primary structure comprises 191 residues: Adenylate kinase (191 aa).

A10–T15 contributes to the ATP binding site. The interval S30–V59 is NMP. AMP contacts are provided by residues T31, R36, E57–V59, G85–R88, and Q92. An LID region spans residues K126–D136. Position 127 (R127) interacts with ATP. Residues R133 and R144 each coordinate AMP. Position 172 (G172) interacts with ATP.

Belongs to the adenylate kinase family. Monomer.

The protein resides in the cytoplasm. It catalyses the reaction AMP + ATP = 2 ADP. It participates in purine metabolism; AMP biosynthesis via salvage pathway; AMP from ADP: step 1/1. In terms of biological role, catalyzes the reversible transfer of the terminal phosphate group between ATP and AMP. Plays an important role in cellular energy homeostasis and in adenine nucleotide metabolism. In Caulobacter vibrioides (strain ATCC 19089 / CIP 103742 / CB 15) (Caulobacter crescentus), this protein is Adenylate kinase.